Here is a 310-residue protein sequence, read N- to C-terminus: MEGIKLTLTNLEEFKCEFTLENCDISLANSLRRILLAEIETIAIHNVKVYENTSSLPDEYIAHRLGLIPLNSAKVDDYNYIWNCNCQGECDRCTIHFDLRVSNFTNEVLEVTSLDLKQRQDHTDEDAVRPIKVYSILRDEYGNKREVGIPIIKLSKGQQIHFECEAQKGIGKMHSKWNPVCISTFSVEPEIIFDQEIQNLDIEQKKALVNACPTKVFGINPHTNTLEVQDHMKCMYCEECVYKCAEDFQKPKLIKIDHKKDKFFFKVETTGVMKPVEVLRRGFSTLRQKLDFMREQIQENSNNQFEYGNE.

The protein belongs to the archaeal Rpo3/eukaryotic RPB3 RNA polymerase subunit family.

The protein resides in the nucleus. In terms of biological role, may be a stage-specific RNA polymerase subunit. This chain is Conjugation stage-specific protein (CNJC), found in Tetrahymena thermophila.